The primary structure comprises 248 residues: Probable transcriptional regulatory protein Mpop_0922 (248 aa).

It belongs to the TACO1 family.

It localises to the cytoplasm. This chain is Probable transcriptional regulatory protein Mpop_0922, found in Methylorubrum populi (strain ATCC BAA-705 / NCIMB 13946 / BJ001) (Methylobacterium populi).